We begin with the raw amino-acid sequence, 164 residues long: I-Kappa-B like protein F1 (164 aa).

3 ANK repeats span residues 57-89 (HGRQ…NINA), 94-124 (TGNT…DLGA), and 128-157 (QQET…AYNN).

Belongs to the polydnaviridae I-Kappa-B-like protein family.

In terms of biological role, suppresses the host immune response through NF-kappa-B inactivation. Possesses ankyrin repeat domains required for NF-kappa-B binding but lacks the regulatory regions required for dissociation from NF-kappa-B and degradation. Therefore, prevents host NF-kappa-B release and subsequent activation. This chain is I-Kappa-B like protein F1 (F2), found in Microplitis demolitor bracovirus (isolate Webb) (MdBV).